A 194-amino-acid polypeptide reads, in one-letter code: Large ribosomal subunit protein eL15 (194 aa).

Residues 162–173 (KTSAGRRARGLH) are compositionally biased toward basic residues. The interval 162 to 194 (KTSAGRRARGLHNRGTGTEKCRPSLTSHKNQGK) is disordered. Residues 185–194 (SLTSHKNQGK) are compositionally biased toward polar residues.

This sequence belongs to the eukaryotic ribosomal protein eL15 family.

The protein is Large ribosomal subunit protein eL15 of Methanocorpusculum labreanum (strain ATCC 43576 / DSM 4855 / Z).